The sequence spans 428 residues: Ectonucleoside triphosphate diphosphohydrolase 5 (428 aa).

Positions 1–24 (MTSSRLPVLLALVFSSLSPVLSHS) are cleaved as a signal peptide. Glutamate 172 serves as the catalytic Proton acceptor. Asparagine 232 carries an N-linked (GlcNAc...) asparagine glycan. Disulfide bonds link cysteine 272-cysteine 303 and cysteine 363-cysteine 377.

This sequence belongs to the GDA1/CD39 NTPase family. In terms of assembly, monomer; active form. Homodimer; disulfide-linked. Homodimers are enzymatically inactive. The cofactor is Ca(2+). It depends on Mg(2+) as a cofactor.

The protein resides in the endoplasmic reticulum. It localises to the secreted. The catalysed reaction is a ribonucleoside 5'-diphosphate + H2O = a ribonucleoside 5'-phosphate + phosphate + H(+). It carries out the reaction GDP + H2O = GMP + phosphate + H(+). The enzyme catalyses UDP + H2O = UMP + phosphate + H(+). It catalyses the reaction IDP + H2O = IMP + phosphate + H(+). The catalysed reaction is CDP + H2O = CMP + phosphate + H(+). It carries out the reaction ADP + H2O = AMP + phosphate + H(+). It functions in the pathway protein modification; protein glycosylation. Hydrolyzes nucleoside diphosphates with a preference for GDP, IDP and UDP compared to ADP and CDP. In the lumen of the endoplasmic reticulum, hydrolyzes UDP that acts as an end-product feedback inhibitor of the UDP-Glc:glycoprotein glucosyltransferases. UMP can be transported back by an UDP-sugar antiporter to the cytosol where it is consumed to regenerate UDP-glucose. Therefore, it positively regulates protein reglucosylation by clearing UDP from the ER lumen and by promoting the regeneration of UDP-glucose. Protein reglucosylation is essential to proper glycoprotein folding and quality control in the ER. In Gallus gallus (Chicken), this protein is Ectonucleoside triphosphate diphosphohydrolase 5 (ENTPD5).